Reading from the N-terminus, the 417-residue chain is Glutamyl-tRNA reductase (417 aa).

Substrate-binding positions include 48-51 (TCNR), S100, 105-107 (EDQ), and Q111. C49 serves as the catalytic Nucleophile. An NADP(+)-binding site is contributed by 180-185 (GAGETG).

This sequence belongs to the glutamyl-tRNA reductase family. As to quaternary structure, homodimer.

It catalyses the reaction (S)-4-amino-5-oxopentanoate + tRNA(Glu) + NADP(+) = L-glutamyl-tRNA(Glu) + NADPH + H(+). The protein operates within porphyrin-containing compound metabolism; protoporphyrin-IX biosynthesis; 5-aminolevulinate from L-glutamyl-tRNA(Glu): step 1/2. Its function is as follows. Catalyzes the NADPH-dependent reduction of glutamyl-tRNA(Glu) to glutamate 1-semialdehyde (GSA). This is Glutamyl-tRNA reductase from Methanothrix thermoacetophila (strain DSM 6194 / JCM 14653 / NBRC 101360 / PT) (Methanosaeta thermophila).